Reading from the N-terminus, the 357-residue chain is RNA-binding protein 43 (357 aa).

Residues 15-104 (RTVVVAGLPV…VSLRVSHFGD (90 aa)) form the RRM domain.

This Homo sapiens (Human) protein is RNA-binding protein 43 (RBM43).